The chain runs to 443 residues: Protein king tubby (443 aa).

Disordered stretches follow at residues 57 to 80 (TNGSPGGINSVAMNTSRNHSNNMR) and 98 to 191 (HELE…EGDV). The segment covering 67–80 (VAMNTSRNHSNNMR) has biased composition (polar residues). A compositionally biased stretch (low complexity) spans 113 to 128 (QQQQSASHSANSTQSQ). Serine 136 carries the post-translational modification Phosphoserine. Positions 177–186 (NGTGNGTGGE) are enriched in gly residues.

Belongs to the TUB family.

The protein resides in the cytoplasm. It is found in the nucleus. It localises to the cell projection. The protein localises to the cilium membrane. Its subcellular location is the rhabdomere. The sequence is that of Protein king tubby from Drosophila sechellia (Fruit fly).